A 317-amino-acid chain; its full sequence is L-lactate dehydrogenase (317 aa).

NAD(+)-binding positions include valine 17, aspartate 38, lysine 43, tyrosine 69, and 83–84 (GA). Positions 86 and 92 each coordinate substrate. Residues serine 105, 122–124 (ATN), and serine 147 contribute to the NAD(+) site. Residue 124–127 (NPVD) coordinates substrate. 152 to 155 (DSAR) is a substrate binding site. 2 residues coordinate beta-D-fructose 1,6-bisphosphate: arginine 157 and histidine 172. Histidine 179 serves as the catalytic Proton acceptor. Position 224 is a phosphotyrosine (tyrosine 224). Residue threonine 233 coordinates substrate.

Belongs to the LDH/MDH superfamily. LDH family. In terms of assembly, homotetramer.

Its subcellular location is the cytoplasm. The enzyme catalyses (S)-lactate + NAD(+) = pyruvate + NADH + H(+). It functions in the pathway fermentation; pyruvate fermentation to lactate; (S)-lactate from pyruvate: step 1/1. Its activity is regulated as follows. Allosterically activated by fructose 1,6-bisphosphate (FBP). Its function is as follows. Catalyzes the conversion of lactate to pyruvate. The chain is L-lactate dehydrogenase from Bacillus velezensis (strain DSM 23117 / BGSC 10A6 / LMG 26770 / FZB42) (Bacillus amyloliquefaciens subsp. plantarum).